The chain runs to 89 residues: Small ribosomal subunit protein uS15 (89 aa).

It belongs to the universal ribosomal protein uS15 family. As to quaternary structure, part of the 30S ribosomal subunit. Forms a bridge to the 50S subunit in the 70S ribosome, contacting the 23S rRNA.

Functionally, one of the primary rRNA binding proteins, it binds directly to 16S rRNA where it helps nucleate assembly of the platform of the 30S subunit by binding and bridging several RNA helices of the 16S rRNA. Its function is as follows. Forms an intersubunit bridge (bridge B4) with the 23S rRNA of the 50S subunit in the ribosome. The chain is Small ribosomal subunit protein uS15 from Bifidobacterium longum (strain DJO10A).